The sequence spans 108 residues: MVMAKNLTKFYVVFLVVLMMVVSLLLAIEGRPVKDSSRSLTQMRDSSMFNGSVIMSSFKPVESSVKDLSWLATVKQSGPSPGVGHHRAKGYKMFGRANDSGPSPGVGH.

An N-terminal signal peptide occupies residues 1-27 (MVMAKNLTKFYVVFLVVLMMVVSLLLA). The propeptide occupies 28–92 (IEGRPVKDSS…VGHHRAKGYK (65 aa)). Asparagine 50 and asparagine 98 each carry an N-linked (GlcNAc...) asparagine glycan. Residues 76–108 (QSGPSPGVGHHRAKGYKMFGRANDSGPSPGVGH) form a disordered region. A hydroxyproline mark is found at proline 102 and proline 104.

The protein belongs to the C-terminally encoded plant signaling peptide (CEP) family. In terms of assembly, interacts with CEP receptors (e.g. CEPR1 and CEPR2). The mature small signaling peptide is generated by proteolytic processing of the longer precursor.

The protein resides in the secreted. It localises to the extracellular space. Its subcellular location is the apoplast. Its function is as follows. Extracellular signaling peptide that may regulate primary root growth rate and systemic nitrogen (N)-demand signaling. In Arabidopsis thaliana (Mouse-ear cress), this protein is Precursor of CEP16.